The chain runs to 328 residues: UPF0421 protein SE_1574 (328 aa).

A run of 4 helical transmembrane segments spans residues 26 to 46 (LFCMLLNLTPIFAILTAIVTI), 61 to 81 (LPATVIGALFAVVFTYVFGDQ), 109 to 129 (AVLTSVAMIPSIHEAYVFNFF), and 132 to 152 (LLTALIGLVTAGLVNFIILPP).

Belongs to the UPF0421 family.

It is found in the cell membrane. In Staphylococcus epidermidis (strain ATCC 12228 / FDA PCI 1200), this protein is UPF0421 protein SE_1574.